The sequence spans 338 residues: Cytochrome c biogenesis protein CcsA (338 aa).

Transmembrane regions (helical) follow at residues 11 to 31, 39 to 59, 76 to 96, 100 to 120, 145 to 165, 244 to 264, 278 to 295, and 305 to 325; these read VLLDNAAFAALMVATALYWLA, LLHELGTGASAVALLSVTGLL, ESLFFLCWCVLAVHIAAEAFA, LVGVFTLPVALGMVAFSSLTL, VMILSYGALMVGSLVSIAFLI, LIGLGFPLITVGIIAGAVWAN, TWSLITWFIFAAYLHARI, and ATLAAVGFVSVWITYLGVNFL.

The protein belongs to the CcmF/CycK/Ccl1/NrfE/CcsA family. May interact with ccs1.

The protein resides in the cell inner membrane. Its function is as follows. Required during biogenesis of c-type cytochromes (cytochrome c6 and cytochrome f) at the step of heme attachment. This is Cytochrome c biogenesis protein CcsA from Gloeobacter violaceus (strain ATCC 29082 / PCC 7421).